Here is a 772-residue protein sequence, read N- to C-terminus: PDZ domain-containing protein 4 (772 aa).

One can recognise a PDZ domain in the interval 136-221 (EVELCKNSHQ…NISLLVARPE (86 aa)). The segment at 239 to 320 (DFGSENEGDL…TNTPGSLRKF (82 aa)) is disordered. Position 242 is a phosphoserine (S242). The span at 287–303 (RTDESTRNEESSEHDLL) shows a compositional bias: basic and acidic residues. Positions 394–424 (VNRNESLGHEMAMLEEELRHLEFKCRNILRA) form a coiled coil. A disordered region spans residues 450–573 (ASEPKKHELS…VGPEGSPYLS (124 aa)). A compositionally biased stretch (basic and acidic residues) spans 452–472 (EPKKHELSDISELPEKSDKDS). At S459 the chain carries Phosphoserine. Composition is skewed to polar residues over residues 473 to 484 (TSAYNTGESCRS) and 502 to 511 (AGNSNLNRTP). Residues 535–552 (LSRDPEVGRRQHTEERVR) are compositionally biased toward basic and acidic residues.

The protein localises to the cytoplasm. The protein resides in the cell cortex. This Mus musculus (Mouse) protein is PDZ domain-containing protein 4 (Pdzd4).